We begin with the raw amino-acid sequence, 94 residues long: MLQPIGDRVIVKVKDEEEKTVGGIVLASNAKKKPTEGEVVAVGEGAYASNGEKIPMSVKKGDVVLYDRYSGTNVEYEGEKYLVLHEKDILAIAK.

The protein belongs to the GroES chaperonin family. As to quaternary structure, heptamer of 7 subunits arranged in a ring. Interacts with the chaperonin GroEL.

Its subcellular location is the cytoplasm. Together with the chaperonin GroEL, plays an essential role in assisting protein folding. The GroEL-GroES system forms a nano-cage that allows encapsulation of the non-native substrate proteins and provides a physical environment optimized to promote and accelerate protein folding. GroES binds to the apical surface of the GroEL ring, thereby capping the opening of the GroEL channel. In Lactobacillus helveticus (strain DPC 4571), this protein is Co-chaperonin GroES.